A 220-amino-acid chain; its full sequence is MAKNRFNQHWLHDHINDPYVKMAQREGYRARAAYKLKEIDEQDKLIRPGQVIVDLGATPGSWSQYARNKLAQGKKRDTQREGGIDGTIIALDLLPMEPIADVHFIQGDFREDDVLRQLEDVLEGRAVDLVISDMAPNLSGVASADAARIEHLCDLALEFAQNHLKPDGALLVKCFHGSGYSQIVEKFKQQFKVVAPRKPKASRDKSSETFILGRQLKQPR.

S-adenosyl-L-methionine contacts are provided by G60, W62, D92, D108, and D133. The Proton acceptor role is filled by K173. Residues 197–220 (RKPKASRDKSSETFILGRQLKQPR) are disordered.

The protein belongs to the class I-like SAM-binding methyltransferase superfamily. RNA methyltransferase RlmE family.

It localises to the cytoplasm. The enzyme catalyses uridine(2552) in 23S rRNA + S-adenosyl-L-methionine = 2'-O-methyluridine(2552) in 23S rRNA + S-adenosyl-L-homocysteine + H(+). Its function is as follows. Specifically methylates the uridine in position 2552 of 23S rRNA at the 2'-O position of the ribose in the fully assembled 50S ribosomal subunit. This is Ribosomal RNA large subunit methyltransferase E from Burkholderia ambifaria (strain MC40-6).